Reading from the N-terminus, the 140-residue chain is Seminal plasma protein A3 (140 aa).

An N-terminal signal peptide occupies residues 1–25; sequence MALRLGLFLIWAGVSMFLQLDPVNG. Fibronectin type-II domains lie at 49–93 and 94–140; these read TKDN…YCTK and NDYA…WKYC. 4 cysteine pairs are disulfide-bonded: Cys-54–Cys-78, Cys-68–Cys-91, Cys-99–Cys-125, and Cys-113–Cys-140.

The protein belongs to the seminal plasma protein family.

It is found in the secreted. In terms of biological role, the BSP-A proteins from seminal plasma exhibit both simulatory and inhibitory actions on the release of pituitary gonadotropins. The exact function of these proteins is not known. The polypeptide is Seminal plasma protein A3 (Bos taurus (Bovine)).